The chain runs to 571 residues: Isthmin-2 (571 aa).

The signal sequence occupies residues 1–26; the sequence is MRALRDRAGLLLCVLLLAALLEAALG. 3 disordered regions span residues 30-60, 116-141, and 257-294; these read KKPR…LKEE, ANTT…LREE, and EKDR…DEEE. The span at 116–131 shows a compositional bias: polar residues; that stretch reads ANTTLSTPNPDTQASA. Residue asparagine 117 is glycosylated (N-linked (GlcNAc...) asparagine). A compositionally biased stretch (basic and acidic residues) spans 257-268; sequence EKDRAPGEKGEE. Acidic residues predominate over residues 269 to 294; that stretch reads KEEDEDYPSEDIEGEDQEDKEEDEEE. N-linked (GlcNAc...) asparagine glycosylation occurs at asparagine 300. The region spanning 327-371 is the TSP type-1 domain; sequence EPQKEWSPWSPCSGNCSTGKQQRTRPCGYGCTATETRTCDLPSCP. 3 disulfide bridges follow: cysteine 338/cysteine 365, cysteine 342/cysteine 370, and cysteine 353/cysteine 357. Residue asparagine 392 is glycosylated (N-linked (GlcNAc...) asparagine). In terms of domain architecture, AMOP spans 396–559; the sequence is MHDQDVDSCE…RACTDNPLEE (164 aa).

This sequence belongs to the isthmin family. Expressed at high levels in the placenta and at moderate levels in the pancreas, kidney, heart, liver, lung, brain and skeletal muscle.

The protein localises to the secreted. In Homo sapiens (Human), this protein is Isthmin-2 (ISM2).